Consider the following 76-residue polypeptide: Conotoxin VnMKLT2-013 (76 aa).

A signal peptide spans 1–23 (MMKLTCVLIIAVLFLTACQLTTA). Residues 24-42 (ETRDEYRAVRSSDEVQNSR) constitute a propeptide that is removed on maturation. The segment at 29–49 (YRAVRSSDEVQNSRSTDDCST) is disordered. Disulfide bonds link Cys47–Cys58, Cys52–Cys63, and Cys57–Cys72.

The protein belongs to the conotoxin O1 superfamily. In terms of tissue distribution, expressed by the venom duct.

It localises to the secreted. The chain is Conotoxin VnMKLT2-013 from Conus ventricosus (Mediterranean cone).